Here is a 99-residue protein sequence, read N- to C-terminus: MDLISVLALWPYLLPVVAGGAVWAMRRSFASTERVERLENRMTEMETRYASIPGTEDVHEMRLRIAELSGDIRVLSQRVQSFSHQLELLLENAVNRSNS.

Residues 3–23 form a helical membrane-spanning segment; the sequence is LISVLALWPYLLPVVAGGAVW.

It is found in the host cell inner membrane. Facilitates the release of the SAR-endolysin. In Enterobacteriaceae (Bacteriophage Mu), this protein is Releasin protein.